We begin with the raw amino-acid sequence, 162 residues long: uncharacterized protein (162 aa).

A helical transmembrane segment spans residues 5–25 (IIILFLFTAILCSITLCGCIS).

The protein resides in the membrane. This is an uncharacterized protein from Methanocaldococcus jannaschii (strain ATCC 43067 / DSM 2661 / JAL-1 / JCM 10045 / NBRC 100440) (Methanococcus jannaschii).